A 326-amino-acid polypeptide reads, in one-letter code: tRNA-dihydrouridine(16) synthase (326 aa).

Residues 8-10 (PME) and Gln69 each bind FMN. The active-site Proton donor is the Cys99. FMN-binding positions include Lys140, 200–202 (NGE), and 224–225 (GR).

This sequence belongs to the Dus family. DusC subfamily. The cofactor is FMN.

The catalysed reaction is 5,6-dihydrouridine(16) in tRNA + NADP(+) = uridine(16) in tRNA + NADPH + H(+). It carries out the reaction 5,6-dihydrouridine(16) in tRNA + NAD(+) = uridine(16) in tRNA + NADH + H(+). Catalyzes the synthesis of 5,6-dihydrouridine (D), a modified base found in the D-loop of most tRNAs, via the reduction of the C5-C6 double bond in target uridines. Specifically modifies U16 in tRNAs. The sequence is that of tRNA-dihydrouridine(16) synthase from Ralstonia nicotianae (strain ATCC BAA-1114 / GMI1000) (Ralstonia solanacearum).